Reading from the N-terminus, the 157-residue chain is Small ribosomal subunit protein uS7 (157 aa).

Belongs to the universal ribosomal protein uS7 family. In terms of assembly, part of the 30S ribosomal subunit. Contacts proteins S9 and S11.

Its function is as follows. One of the primary rRNA binding proteins, it binds directly to 16S rRNA where it nucleates assembly of the head domain of the 30S subunit. Is located at the subunit interface close to the decoding center, probably blocks exit of the E-site tRNA. The polypeptide is Small ribosomal subunit protein uS7 (Francisella philomiragia subsp. philomiragia (strain ATCC 25017 / CCUG 19701 / FSC 153 / O#319-036)).